The chain runs to 100 residues: NAD(P)H-quinone oxidoreductase subunit 4L, chloroplastic (100 aa).

3 helical membrane passes run 2 to 22, 28 to 48, and 61 to 81; these read ILQH…FGLI, VKIL…LVIF, and LFGL…LAIL.

It belongs to the complex I subunit 4L family. NDH is composed of at least 16 different subunits, 5 of which are encoded in the nucleus.

It localises to the plastid. It is found in the chloroplast thylakoid membrane. It catalyses the reaction a plastoquinone + NADH + (n+1) H(+)(in) = a plastoquinol + NAD(+) + n H(+)(out). It carries out the reaction a plastoquinone + NADPH + (n+1) H(+)(in) = a plastoquinol + NADP(+) + n H(+)(out). NDH shuttles electrons from NAD(P)H:plastoquinone, via FMN and iron-sulfur (Fe-S) centers, to quinones in the photosynthetic chain and possibly in a chloroplast respiratory chain. The immediate electron acceptor for the enzyme in this species is believed to be plastoquinone. Couples the redox reaction to proton translocation, and thus conserves the redox energy in a proton gradient. The chain is NAD(P)H-quinone oxidoreductase subunit 4L, chloroplastic from Chara vulgaris (Common stonewort).